The chain runs to 478 residues: Glutamate-1-semialdehyde 2,1-aminomutase, chloroplastic (478 aa).

Position 318 is an N6-(pyridoxal phosphate)lysine (lysine 318).

The protein belongs to the class-III pyridoxal-phosphate-dependent aminotransferase family. HemL subfamily. As to quaternary structure, homodimer. Pyridoxal 5'-phosphate is required as a cofactor.

It is found in the plastid. The protein resides in the chloroplast. The enzyme catalyses (S)-4-amino-5-oxopentanoate = 5-aminolevulinate. The protein operates within porphyrin-containing compound metabolism; protoporphyrin-IX biosynthesis; 5-aminolevulinate from L-glutamyl-tRNA(Glu): step 2/2. It participates in porphyrin-containing compound metabolism; chlorophyll biosynthesis. The polypeptide is Glutamate-1-semialdehyde 2,1-aminomutase, chloroplastic (GSA) (Nicotiana tabacum (Common tobacco)).